Consider the following 311-residue polypeptide: Aspartate carbamoyltransferase catalytic subunit (311 aa).

Carbamoyl phosphate contacts are provided by Arg55 and Thr56. Lys85 is an L-aspartate binding site. The carbamoyl phosphate site is built by Arg106, His135, and Gln138. L-aspartate is bound by residues Arg168 and Arg230. 2 residues coordinate carbamoyl phosphate: Leu268 and Pro269.

This sequence belongs to the aspartate/ornithine carbamoyltransferase superfamily. ATCase family. As to quaternary structure, heterododecamer (2C3:3R2) of six catalytic PyrB chains organized as two trimers (C3), and six regulatory PyrI chains organized as three dimers (R2).

It carries out the reaction carbamoyl phosphate + L-aspartate = N-carbamoyl-L-aspartate + phosphate + H(+). It participates in pyrimidine metabolism; UMP biosynthesis via de novo pathway; (S)-dihydroorotate from bicarbonate: step 2/3. Functionally, catalyzes the condensation of carbamoyl phosphate and aspartate to form carbamoyl aspartate and inorganic phosphate, the committed step in the de novo pyrimidine nucleotide biosynthesis pathway. The polypeptide is Aspartate carbamoyltransferase catalytic subunit (Cronobacter sakazakii (strain ATCC BAA-894) (Enterobacter sakazakii)).